The sequence spans 144 residues: Phosphomevalonate dehydratase small subunit (144 aa).

Residue Ser65 is the Proton acceptor of the active site.

The protein belongs to the AcnX type II small subunit family. In terms of assembly, heterodimer composed of a large subunit (PMDh-L) and a small subunit (PMDh-S).

The enzyme catalyses (R)-5-phosphomevalonate = (2E)-3-methyl-5-phosphooxypent-2-enoate + H2O. Its pathway is isoprenoid biosynthesis; isopentenyl diphosphate biosynthesis via mevalonate pathway. Its function is as follows. Component of a hydro-lyase that catalyzes the dehydration of mevalonate 5-phosphate (MVA5P) to form trans-anhydromevalonate 5-phosphate (tAHMP). Involved in the archaeal mevalonate (MVA) pathway, which provides fundamental precursors for isoprenoid biosynthesis, such as isopentenyl diphosphate (IPP) and dimethylallyl diphosphate (DMAPP). This is Phosphomevalonate dehydratase small subunit from Methanosarcina acetivorans (strain ATCC 35395 / DSM 2834 / JCM 12185 / C2A).